The sequence spans 74 residues: Small integral membrane protein 15 (74 aa).

The chain crosses the membrane as a helical span at residues 20–40 (YGFLTTVILVLTPLFIISAAL). A coiled-coil region spans residues 48 to 74 (IETREREQKKKRKRQENIVKAKRAKKD). Positions 53-74 (REQKKKRKRQENIVKAKRAKKD) are disordered. Over residues 56–74 (KKKRKRQENIVKAKRAKKD) the composition is skewed to basic residues.

Belongs to the SMIM15 family.

It localises to the membrane. This is Small integral membrane protein 15 (SMIM15) from Gallus gallus (Chicken).